A 320-amino-acid polypeptide reads, in one-letter code: Cytochrome f (320 aa).

The N-terminal stretch at 1 to 35 (MQTRNTFSWIREEITRSISVSLIIYIITWASISSA) is a signal peptide. Tyr-36, Cys-56, Cys-59, and His-60 together coordinate heme. The helical transmembrane segment at 286 to 305 (VQGLLFFLGSVVLAQIFLVL) threads the bilayer.

It belongs to the cytochrome f family. In terms of assembly, the 4 large subunits of the cytochrome b6-f complex are cytochrome b6, subunit IV (17 kDa polypeptide, petD), cytochrome f and the Rieske protein, while the 4 small subunits are PetG, PetL, PetM and PetN. The complex functions as a dimer. Heme is required as a cofactor.

Its subcellular location is the plastid. It localises to the chloroplast thylakoid membrane. Functionally, component of the cytochrome b6-f complex, which mediates electron transfer between photosystem II (PSII) and photosystem I (PSI), cyclic electron flow around PSI, and state transitions. In Arabidopsis thaliana (Mouse-ear cress), this protein is Cytochrome f (petA).